A 497-amino-acid chain; its full sequence is Cytochrome P450 71A12 (497 aa).

Residues 4-24 (ILMVSLCLTTLITLFLLKQFL) form a helical membrane-spanning segment. Position 439 (cysteine 439) interacts with heme.

This sequence belongs to the cytochrome P450 family. Heme serves as cofactor.

The protein resides in the membrane. In terms of biological role, converts indole-3-acetaldoxime to indole cyanohydrin. Involved in the biosynthetic pathway to 4-hydroxyindole-3-carbonyl nitrile (4-OH-ICN), a cyanogenic metabolite required for inducible pathogen defense. The chain is Cytochrome P450 71A12 (CYP71A12) from Arabidopsis thaliana (Mouse-ear cress).